The following is a 495-amino-acid chain: Cytochrome P450 Tp4149 (495 aa).

Helical transmembrane passes span 4 to 24 and 208 to 228; these read ILSL…MFFI and YLSM…SWVD. An N-linked (GlcNAc...) asparagine glycan is attached at N419. A heme-binding site is contributed by C437.

This sequence belongs to the cytochrome P450 family. Requires heme as cofactor.

The protein localises to the membrane. Its pathway is secondary metabolite biosynthesis; terpenoid biosynthesis. In terms of biological role, probably involved in the biosynthesis of germacrene-derived sesquiterpene lactones. This Tanacetum parthenium (Feverfew) protein is Cytochrome P450 Tp4149.